The primary structure comprises 585 residues: Arginine--tRNA ligase (585 aa).

The 'HIGH' region motif lies at 131–141 (ANPTGPMHVGH).

This sequence belongs to the class-I aminoacyl-tRNA synthetase family. In terms of assembly, monomer.

The protein resides in the cytoplasm. The enzyme catalyses tRNA(Arg) + L-arginine + ATP = L-arginyl-tRNA(Arg) + AMP + diphosphate. The polypeptide is Arginine--tRNA ligase (Bartonella quintana (strain Toulouse) (Rochalimaea quintana)).